A 346-amino-acid chain; its full sequence is Phosphoribosylformylglycinamidine cyclo-ligase (346 aa).

It belongs to the AIR synthase family.

It localises to the cytoplasm. The enzyme catalyses 2-formamido-N(1)-(5-O-phospho-beta-D-ribosyl)acetamidine + ATP = 5-amino-1-(5-phospho-beta-D-ribosyl)imidazole + ADP + phosphate + H(+). It participates in purine metabolism; IMP biosynthesis via de novo pathway; 5-amino-1-(5-phospho-D-ribosyl)imidazole from N(2)-formyl-N(1)-(5-phospho-D-ribosyl)glycinamide: step 2/2. This is Phosphoribosylformylglycinamidine cyclo-ligase from Vibrio parahaemolyticus serotype O3:K6 (strain RIMD 2210633).